The sequence spans 409 residues: UPF0261 protein Spro_4740 (409 aa).

Belongs to the UPF0261 family.

This is UPF0261 protein Spro_4740 from Serratia proteamaculans (strain 568).